A 360-amino-acid chain; its full sequence is Peptide chain release factor 1 (360 aa).

Gln235 bears the N5-methylglutamine mark. A compositionally biased stretch (basic and acidic residues) spans 284–293 (HKRQQEEAST). The interval 284–305 (HKRQQEEASTRRNLLGSGDRSD) is disordered.

It belongs to the prokaryotic/mitochondrial release factor family. Post-translationally, methylated by PrmC. Methylation increases the termination efficiency of RF1.

Its subcellular location is the cytoplasm. In terms of biological role, peptide chain release factor 1 directs the termination of translation in response to the peptide chain termination codons UAG and UAA. The protein is Peptide chain release factor 1 of Pectobacterium atrosepticum (strain SCRI 1043 / ATCC BAA-672) (Erwinia carotovora subsp. atroseptica).